Reading from the N-terminus, the 1776-residue chain is TOG array regulator of axonemal microtubules protein 1 (1776 aa).

2 TOG regions span residues 94 to 311 (EEET…RRLE) and 351 to 595 (PQEL…MPSS). HEAT repeat units lie at residues 175 to 212 (AFSL…RSSG), 214 to 246 (VLRT…PEDL), 250 to 288 (LDLT…RLGQ), 344 to 383 (NLKF…KFNP), 389 to 426 (ASLV…RLGE), 430 to 465 (QFLG…MKEV), 466 to 503 (GPQR…YPSE), and 505 to 542 (FDLP…SMGS). Disordered regions lie at residues 655–676 (KNKL…TSNS), 817–921 (ILPS…RGIN), 970–1000 (HSSL…DSPD), and 1062–1084 (TRLS…GFTR). Composition is skewed to polar residues over residues 826–836 (PRTSPKHTSPL), 845–855 (DNSISFSNSWP), and 871–892 (LANQ…TAVQ). A compositionally biased stretch (low complexity) spans 988 to 1000 (SGSSSTSDVDSPD). Positions 1259–1481 (DIALTEALRL…YIKESVKNLR (223 aa)) are TOG 3. HEAT repeat units lie at residues 1297-1334 (TKLH…YLKK) and 1338-1375 (QELD…NVTP). A disordered region spans residues 1493–1536 (ASAKGRRSHPGSVGNTRSSSVSRDAFSSSEREVTEVREVPRKSA). The span at 1509 to 1520 (RSSSVSRDAFSS) shows a compositional bias: low complexity. The span at 1521–1533 (SEREVTEVREVPR) shows a compositional bias: basic and acidic residues. The tract at residues 1540–1776 (SLESAEYIKV…LLDVTVLSEL (237 aa)) is TOG 4. HEAT repeat units follow at residues 1541-1578 (LESA…NNQE), 1582-1619 (GNIV…LLRD), and 1623-1661 (PIIN…HVDN).

The protein belongs to the Crescerin family. As to quaternary structure, interacts with ARMC9. Interacts with CCDC66, CEP104 and CSPP1.

The protein localises to the cell projection. Its subcellular location is the cilium. It is found in the cytoplasm. The protein resides in the cytoskeleton. It localises to the cilium axoneme. In terms of biological role, involved in ciliogenesis. It is required for appropriate acetylation and polyglutamylation of ciliary microtubules, and regulation of cilium length. Interacts with microtubules and promotes microtubule polymerization via its HEAT repeat domains, especially those in TOG region 2 and 4. The chain is TOG array regulator of axonemal microtubules protein 1 (Togaram1) from Mus musculus (Mouse).